A 348-amino-acid polypeptide reads, in one-letter code: Probable dual-specificity RNA methyltransferase RlmN (348 aa).

Glu93 (proton acceptor) is an active-site residue. The Radical SAM core domain maps to 99–333; it reads TEKRLTACLS…VSLRKSRGSD (235 aa). Cys106 and Cys338 are disulfide-bonded. Residues Cys113, Cys117, and Cys120 each coordinate [4Fe-4S] cluster. S-adenosyl-L-methionine-binding positions include 160 to 161, Ser190, 219 to 221, and Asn295; these read GE and SLH. Cys338 functions as the S-methylcysteine intermediate in the catalytic mechanism.

This sequence belongs to the radical SAM superfamily. RlmN family. It depends on [4Fe-4S] cluster as a cofactor.

Its subcellular location is the cytoplasm. It catalyses the reaction adenosine(2503) in 23S rRNA + 2 reduced [2Fe-2S]-[ferredoxin] + 2 S-adenosyl-L-methionine = 2-methyladenosine(2503) in 23S rRNA + 5'-deoxyadenosine + L-methionine + 2 oxidized [2Fe-2S]-[ferredoxin] + S-adenosyl-L-homocysteine. The enzyme catalyses adenosine(37) in tRNA + 2 reduced [2Fe-2S]-[ferredoxin] + 2 S-adenosyl-L-methionine = 2-methyladenosine(37) in tRNA + 5'-deoxyadenosine + L-methionine + 2 oxidized [2Fe-2S]-[ferredoxin] + S-adenosyl-L-homocysteine. In terms of biological role, specifically methylates position 2 of adenine 2503 in 23S rRNA and position 2 of adenine 37 in tRNAs. This Prochlorococcus marinus (strain MIT 9515) protein is Probable dual-specificity RNA methyltransferase RlmN.